We begin with the raw amino-acid sequence, 366 residues long: Chorismate synthase (366 aa).

NADP(+) is bound at residue arginine 46. FMN contacts are provided by residues 122–124 (RSS), 243–244 (NG), glycine 284, 299–303 (KPTPS), and arginine 325.

It belongs to the chorismate synthase family. Homotetramer. It depends on FMNH2 as a cofactor.

It carries out the reaction 5-O-(1-carboxyvinyl)-3-phosphoshikimate = chorismate + phosphate. Its pathway is metabolic intermediate biosynthesis; chorismate biosynthesis; chorismate from D-erythrose 4-phosphate and phosphoenolpyruvate: step 7/7. Catalyzes the anti-1,4-elimination of the C-3 phosphate and the C-6 proR hydrogen from 5-enolpyruvylshikimate-3-phosphate (EPSP) to yield chorismate, which is the branch point compound that serves as the starting substrate for the three terminal pathways of aromatic amino acid biosynthesis. This reaction introduces a second double bond into the aromatic ring system. The protein is Chorismate synthase of Campylobacter hominis (strain ATCC BAA-381 / DSM 21671 / CCUG 45161 / LMG 19568 / NCTC 13146 / CH001A).